The following is a 326-amino-acid chain: Microtubule-associated protein RP/EB family member 2 (326 aa).

Ser9 is subject to Phosphoserine. The Calponin-homology (CH) domain maps to Thr56–Asp158. A Phosphotyrosine modification is found at Tyr166. 2 disordered regions span residues Glu170–Leu239 and Ala298–Tyr326. Residues Gln186 to Tyr326 form a DCTN1-binding region. Low complexity predominate over residues Ser199–Ser233. A phosphoserine mark is found at Ser218 and Ser235. The region spanning Ser235–His305 is the EB1 C-terminal domain. Positions Glu258–Glu301 are APC-binding. A compositionally biased stretch (basic and acidic residues) spans Ser299–His316. The segment covering Glu317 to Tyr326 has biased composition (low complexity).

Belongs to the MAPRE family. Interacts with DCTN1. Interacts with APC (via C-terminal). Interacts with monomeric and polymerized tubulin. Interacts with SLAIN1. Interacts (via the N-terminal region) with BAG1. Interacts with ASB14. Interacts with HAX1; this interaction is essential for epidermal cell migration. Phosphorylated at Ser-235 by CK2 leading to enhanced cell adhesion. Phosphorylated by CDK1 and AURKB during mitosis reduces the binding affinity of MAPRE2 for microtubules. Post-translationally, ubiquitinated in an ASB14-dependent manner; leading to proteasomal degradation.

It localises to the cytoplasm. It is found in the cytoskeleton. Its function is as follows. Adapter protein that is involved in microtubule polymerization, and spindle function by stabilizing microtubules and anchoring them at centrosomes. Therefore, ensures mitotic progression and genome stability. Acts as a central regulator of microtubule reorganization in apico-basal epithelial differentiation. Plays a role during oocyte meiosis by regulating microtubule dynamics. Participates in neurite growth by interacting with plexin B3/PLXNB3 and microtubule reorganization during apico-basal epithelial differentiation. Also plays an essential role for cell migration and focal adhesion dynamics. Mechanistically, recruits HAX1 to microtubules in order to regulate focal adhesion dynamics. The polypeptide is Microtubule-associated protein RP/EB family member 2 (MAPRE2) (Bos taurus (Bovine)).